We begin with the raw amino-acid sequence, 212 residues long: ATP-dependent dethiobiotin synthetase BioD (212 aa).

Residue 13 to 18 participates in ATP binding; it reads GVGKTV. A Mg(2+)-binding site is contributed by Thr17. Residue Lys33 is part of the active site. Residue Glu100 participates in Mg(2+) binding. ATP-binding positions include 100 to 103 and 184 to 186; these read EGAG and PHL.

Belongs to the dethiobiotin synthetase family. Homodimer. Mg(2+) is required as a cofactor.

The protein resides in the cytoplasm. The enzyme catalyses (7R,8S)-7,8-diammoniononanoate + CO2 + ATP = (4R,5S)-dethiobiotin + ADP + phosphate + 3 H(+). It functions in the pathway cofactor biosynthesis; biotin biosynthesis; biotin from 7,8-diaminononanoate: step 1/2. In terms of biological role, catalyzes a mechanistically unusual reaction, the ATP-dependent insertion of CO2 between the N7 and N8 nitrogen atoms of 7,8-diaminopelargonic acid (DAPA, also called 7,8-diammoniononanoate) to form a ureido ring. The chain is ATP-dependent dethiobiotin synthetase BioD from Rhodopseudomonas palustris (strain BisB5).